We begin with the raw amino-acid sequence, 191 residues long: Imidazoleglycerol-phosphate dehydratase (191 aa).

Belongs to the imidazoleglycerol-phosphate dehydratase family.

The protein resides in the cytoplasm. It carries out the reaction D-erythro-1-(imidazol-4-yl)glycerol 3-phosphate = 3-(imidazol-4-yl)-2-oxopropyl phosphate + H2O. The protein operates within amino-acid biosynthesis; L-histidine biosynthesis; L-histidine from 5-phospho-alpha-D-ribose 1-diphosphate: step 6/9. The sequence is that of Imidazoleglycerol-phosphate dehydratase from Methanosarcina barkeri (strain Fusaro / DSM 804).